A 121-amino-acid polypeptide reads, in one-letter code: Small ribosomal subunit protein uS13 (121 aa).

A disordered region spans residues glycine 94–lysine 121. The segment covering serine 106 to lysine 121 has biased composition (basic residues).

The protein belongs to the universal ribosomal protein uS13 family. Part of the 30S ribosomal subunit. Forms a loose heterodimer with protein S19. Forms two bridges to the 50S subunit in the 70S ribosome.

Located at the top of the head of the 30S subunit, it contacts several helices of the 16S rRNA. In the 70S ribosome it contacts the 23S rRNA (bridge B1a) and protein L5 of the 50S subunit (bridge B1b), connecting the 2 subunits; these bridges are implicated in subunit movement. Contacts the tRNAs in the A and P-sites. The polypeptide is Small ribosomal subunit protein uS13 (Halalkalibacterium halodurans (strain ATCC BAA-125 / DSM 18197 / FERM 7344 / JCM 9153 / C-125) (Bacillus halodurans)).